The following is a 192-amino-acid chain: Flavin prenyltransferase UbiX (192 aa).

Residues 10–12 (GAS), S36, 92–95 (SMTT), and R127 each bind FMN. Dimethylallyl phosphate is bound by residues Y157 and K173.

Belongs to the UbiX/PAD1 family.

The catalysed reaction is dimethylallyl phosphate + FMNH2 = prenylated FMNH2 + phosphate. In terms of biological role, flavin prenyltransferase that catalyzes the synthesis of the prenylated FMN cofactor (prenyl-FMN) for 4-hydroxy-3-polyprenylbenzoic acid decarboxylase UbiD. The prenyltransferase is metal-independent and links a dimethylallyl moiety from dimethylallyl monophosphate (DMAP) to the flavin N5 and C6 atoms of FMN. The sequence is that of Flavin prenyltransferase UbiX from Chlamydia pneumoniae (Chlamydophila pneumoniae).